A 206-amino-acid polypeptide reads, in one-letter code: Ribosomal RNA small subunit methyltransferase G (206 aa).

S-adenosyl-L-methionine-binding positions include Gly73, Leu78, 124-125, and Arg139; that span reads VE.

It belongs to the methyltransferase superfamily. RNA methyltransferase RsmG family.

The protein localises to the cytoplasm. It carries out the reaction guanosine(527) in 16S rRNA + S-adenosyl-L-methionine = N(7)-methylguanosine(527) in 16S rRNA + S-adenosyl-L-homocysteine. In terms of biological role, specifically methylates the N7 position of guanine in position 527 of 16S rRNA. The protein is Ribosomal RNA small subunit methyltransferase G of Photobacterium profundum (strain SS9).